The primary structure comprises 406 residues: Multifunctional CCA protein (406 aa).

Residues glycine 8 and arginine 11 each contribute to the ATP site. CTP contacts are provided by glycine 8 and arginine 11. Mg(2+) is bound by residues aspartate 21 and aspartate 23. Positions 91, 138, and 141 each coordinate ATP. Positions 91, 138, and 141 each coordinate CTP. The HD domain maps to 229–331 (TGIHQEMVSD…LELLGRCDAL (103 aa)).

The protein belongs to the tRNA nucleotidyltransferase/poly(A) polymerase family. Bacterial CCA-adding enzyme type 1 subfamily. Monomer. Can also form homodimers and oligomers. It depends on Mg(2+) as a cofactor. The cofactor is Ni(2+).

The enzyme catalyses a tRNA precursor + 2 CTP + ATP = a tRNA with a 3' CCA end + 3 diphosphate. The catalysed reaction is a tRNA with a 3' CCA end + 2 CTP + ATP = a tRNA with a 3' CCACCA end + 3 diphosphate. In terms of biological role, catalyzes the addition and repair of the essential 3'-terminal CCA sequence in tRNAs without using a nucleic acid template. Adds these three nucleotides in the order of C, C, and A to the tRNA nucleotide-73, using CTP and ATP as substrates and producing inorganic pyrophosphate. tRNA 3'-terminal CCA addition is required both for tRNA processing and repair. Also involved in tRNA surveillance by mediating tandem CCA addition to generate a CCACCA at the 3' terminus of unstable tRNAs. While stable tRNAs receive only 3'-terminal CCA, unstable tRNAs are marked with CCACCA and rapidly degraded. In Stenotrophomonas maltophilia (strain R551-3), this protein is Multifunctional CCA protein.